The primary structure comprises 311 residues: Methionyl-tRNA formyltransferase (311 aa).

The segment at 33 to 52 is disordered; it reads RPDRPAGRGRHQRSSPVREL. 110–113 lines the (6S)-5,6,7,8-tetrahydrofolate pocket; that stretch reads SLLP.

The protein belongs to the Fmt family.

The catalysed reaction is L-methionyl-tRNA(fMet) + (6R)-10-formyltetrahydrofolate = N-formyl-L-methionyl-tRNA(fMet) + (6S)-5,6,7,8-tetrahydrofolate + H(+). In terms of biological role, attaches a formyl group to the free amino group of methionyl-tRNA(fMet). The formyl group appears to play a dual role in the initiator identity of N-formylmethionyl-tRNA by promoting its recognition by IF2 and preventing the misappropriation of this tRNA by the elongation apparatus. The chain is Methionyl-tRNA formyltransferase from Parafrankia sp. (strain EAN1pec).